Consider the following 417-residue polypeptide: FAD-dependent monooxygenase aptC (417 aa).

Residues 1 to 18 (MTLPVLIIGAGLSGLTTA) form the signal peptide. Residues E32, A43, R117, D332, and G345 each contribute to the FAD site.

Belongs to the paxM FAD-dependent monooxygenase family. It depends on FAD as a cofactor.

It catalyses the reaction 3,6,8,9-tetrahydroxy-1-oxo-3-(2-oxopropyl)-1,2,3,4-tetrahydroanthracene-2-carboxyl-[ACP] + NADPH + O2 + H(+) = 2,3,6,8,9-pentahydroxy-1-oxo-3-(2-oxopropyl)-1,2,3,4-tetrahydroanthracene-2-carboxyl-[ACP] + NADP(+) + H2O. It functions in the pathway secondary metabolite biosynthesis. FAD-dependent monooxygenase; part of the gene cluster that mediates the biosynthesis of asperthecin, an anthraquinone pigment. Polyketide synthase (PKS) aptA catalyzes the formation of the aromatic polyketide from acetyl coenzyme A and seven malonyl coenzyme A molecules. Polyketide is subsequently hydrolyzed by the action of the hydrolase aptB into endocrocin-9-anthrone. Endocrocin-9-anthrone is then oxidized into endocrocin by the monooxygenase aptC. Endocrocin is likely to decarboxylate spontaneously to form emodin which explains why there is no decarboxylase in the asperthecin biosynthesis cluster. Finally, aptC or another endogenous oxygenase catalyzes additional oxidation steps to form asperthecin. This chain is FAD-dependent monooxygenase aptC, found in Emericella nidulans (strain FGSC A4 / ATCC 38163 / CBS 112.46 / NRRL 194 / M139) (Aspergillus nidulans).